The primary structure comprises 419 residues: Acetyltransferase fsoF (419 aa).

Asparagine 2 is a glycosylation site (N-linked (GlcNAc...) asparagine). The next 2 membrane-spanning stretches (helical) occupy residues 4-24 (TIIS…VVGF) and 62-82 (AFLG…AILS). Residues 89–114 (QSPTSSLGGLIPPTTRDTPKTQNNAT) form a disordered region. N-linked (GlcNAc...) asparagine glycans are attached at residues asparagine 112 and asparagine 169. The next 4 helical transmembrane spans lie at 230–250 (YWAI…VVAV), 314–334 (YVFM…SDVS), 337–357 (IPLG…GIML), and 386–406 (VSGP…WIYM).

It belongs to the wax synthase family.

It is found in the membrane. The catalysed reaction is 3-O-(beta-D-glucopyranosyl)-2alpha-hydroxyisomotiol + acetyl-CoA = 3-O-(beta-D-glucopyranosyl)-2alpha-acetoxyisomotiol + CoA. It carries out the reaction 2-deacetylfuscoatroside + acetyl-CoA = fuscoatroside + CoA. It participates in secondary metabolite biosynthesis; terpenoid biosynthesis. Terpene cyclase-glycosyl transferase fusion protein; part of the gene cluster that mediates the biosynthesis of the enfumafungin-type antibiotic, fuscoatroside. Within the pathway, fsoF catalyzes the acetylation of C2-alpha-OH following the C2 hydroxylation by the cytochrome monooxygenase fsoD. The fuscoatroside biosynthesis is initiated by the cyclization of 2,3(S)-oxidosqualene through FsoA's terpene cyclase (TC) domain, leading to the formation of the fernane skeleton isomotiol, harboring a fernane triterpene skeleton with a C8-C9 double bond. Subsequently, C2-alpha-hydroxylation mediated by fsoD results in the production of 2-alpha-hydroxy-isomotiol, which is further acetylated by fsoF. The glycosyltransferase (GT) domain of FsoA may convert isomotiol, 2-alpha-hydroxy-isomotiol, and the acetylated derivative of 2-alpha-hydroxy-isomotiol into their corresponding glycosides 3-O-(beta-D-glucopyranosyl)-isomotiol, 3-O-(beta-D-glucopyranosyl)-2-alpha-hydroxy-isomotiol, and 3-O-(beta-D-glucopyranosyl)-2-alpha-acetoxy-isomotiol, which then undergo oxidative cleavage under the action of fsoE to form s 2-deacetoxy-fuscoatroside, 2-deacetyl-fuscoatroside, and fuscoatroside, respectively. Although hydroxylation followed by acetylation of 3-O-(beta-D-glucopyranosyl)-isomotiol and 2-deacetoxy-fuscoatroside by fsoD and fsoF could not be ruled out, this process is likely to occur with difficulty due to bulky steric hindrance caused by the presence of a glycan at C3 in these compounds. Interestingly, fsoE can also utilize the aglycones isomotiol and 2-alpha-hydroxy-isomotiol as substrates to generate 19-beta-hydroxy-isomotiol and 2-alpha,19-beta-dihydroxy-isomotiol, respectively. These reactions occur with lower efficiency. Finally, fsoE can further convert 2-alpha,19-beta-dihydroxy-isomotiol into 2-alpha-hydroxy-ismotiol-19-one and 2-alpha-hydroxy-ismotiol-19-one into 2-deacetyl-3-deglucopyranosyl-fuscoatroside. In Humicola fuscoatra, this protein is Acetyltransferase fsoF.